The chain runs to 62 residues: Small ribosomal subunit protein eS27 (62 aa).

Positions 17, 20, 36, and 39 each coordinate Zn(2+). A C4-type zinc finger spans residues 17–39 (CPDCENEQVVFERASTVVECTVC).

This sequence belongs to the eukaryotic ribosomal protein eS27 family. Part of the 30S ribosomal subunit. Zn(2+) serves as cofactor.

This is Small ribosomal subunit protein eS27 from Methanoculleus marisnigri (strain ATCC 35101 / DSM 1498 / JR1).